The following is a 254-amino-acid chain: 3-deoxy-manno-octulosonate cytidylyltransferase (254 aa).

The protein belongs to the KdsB family.

It is found in the cytoplasm. It carries out the reaction 3-deoxy-alpha-D-manno-oct-2-ulosonate + CTP = CMP-3-deoxy-beta-D-manno-octulosonate + diphosphate. The protein operates within nucleotide-sugar biosynthesis; CMP-3-deoxy-D-manno-octulosonate biosynthesis; CMP-3-deoxy-D-manno-octulosonate from 3-deoxy-D-manno-octulosonate and CTP: step 1/1. Its pathway is bacterial outer membrane biogenesis; lipopolysaccharide biosynthesis. Activates KDO (a required 8-carbon sugar) for incorporation into bacterial lipopolysaccharide in Gram-negative bacteria. The chain is 3-deoxy-manno-octulosonate cytidylyltransferase from Chlamydia caviae (strain ATCC VR-813 / DSM 19441 / 03DC25 / GPIC) (Chlamydophila caviae).